Reading from the N-terminus, the 969-residue chain is Activity-dependent neuroprotective protein a (969 aa).

The C2H2-type 1 zinc-finger motif lies at 74-97; it reads FCCSDCPFASKYFSAYKNHFRNVH. Residues 107–129 form a C2H2-type 2; atypical zinc finger; sequence LNCSYCTYSGNKRTLETHVRLFH. 2 consecutive C2H2-type zinc fingers follow at residues 169 to 192 and 221 to 244; these read YYCKKCTYRDRLYNVVRRHIYREH and IHCKSCHFTPRSYEALVQHVIEFH. Residues 401–423 form a C2H2-type 5; atypical zinc finger; sequence KICTICNELFPESAYSAHFEKEH. A C2H2-type 6; atypical zinc finger spans residues 443-464; the sequence is SKCLYCNRYLPSDSLLNHMLVH. Residues 466–489 form a C2H2-type 7 zinc finger; sequence LSCPHCHSTFHEVEKIVAHNRLAH. The segment at 583–608 adopts a C2H2-type 8; atypical zinc-finger fold; sequence TLCPLCFTILKGPISDALAHHLRDSH. The C2H2-type 9; atypical zinc-finger motif lies at 623–647; that stretch reads YKCIHCLGVYTSNMTASTITLHLVH. The tract at residues 659-689 is disordered; sequence KPITTGLRSPGAGSLKRELVTPDPSDPKRRK. Residues 732–774 constitute a DNA-binding region (homeobox); that stretch reads AYFNRHPYPSQREVEKLAASLWLWKSDVASHFGNHRRLCDRDF. The tract at residues 911–949 is disordered; sequence DVRANRSSPRVGPKVLDGSVSSSSPDEATWSGNMSSEES. The span at 929–946 shows a compositional bias: polar residues; the sequence is SVSSSSPDEATWSGNMSS.

In terms of assembly, interacts with catenin beta-1/ctnnb1.

The protein resides in the nucleus. In terms of biological role, may be involved in transcriptional regulation. Positively modulates wnt-beta-catenin/ctnnb1 signaling. Required for embryonic neurogenesis. Required for progression through late erythroid differentiation. This is Activity-dependent neuroprotective protein a from Danio rerio (Zebrafish).